The following is a 193-amino-acid chain: Phosphoheptose isomerase (193 aa).

One can recognise an SIS domain in the interval 37–193 (LADSFKAGGK…MLIEKEMAKG (157 aa)). Position 52-54 (52-54 (NGG)) interacts with substrate. Zn(2+)-binding residues include His61 and Glu65. Residues Glu65, 93-94 (ND), 119-121 (STS), Ser124, and Gln172 each bind substrate. Zn(2+)-binding residues include Gln172 and His180.

It belongs to the SIS family. GmhA subfamily. In terms of assembly, homotetramer. Zn(2+) is required as a cofactor.

It localises to the cytoplasm. The enzyme catalyses 2 D-sedoheptulose 7-phosphate = D-glycero-alpha-D-manno-heptose 7-phosphate + D-glycero-beta-D-manno-heptose 7-phosphate. It functions in the pathway carbohydrate biosynthesis; D-glycero-D-manno-heptose 7-phosphate biosynthesis; D-glycero-alpha-D-manno-heptose 7-phosphate and D-glycero-beta-D-manno-heptose 7-phosphate from sedoheptulose 7-phosphate: step 1/1. Catalyzes the isomerization of sedoheptulose 7-phosphate in D-glycero-D-manno-heptose 7-phosphate. This chain is Phosphoheptose isomerase, found in Klebsiella pneumoniae subsp. pneumoniae (strain ATCC 700721 / MGH 78578).